A 350-amino-acid polypeptide reads, in one-letter code: Heat-inducible transcription repressor HrcA (350 aa).

It belongs to the HrcA family.

Negative regulator of class I heat shock genes (grpE-dnaK-dnaJ and groELS operons). Prevents heat-shock induction of these operons. The protein is Heat-inducible transcription repressor HrcA of Xanthomonas euvesicatoria pv. vesicatoria (strain 85-10) (Xanthomonas campestris pv. vesicatoria).